A 209-amino-acid chain; its full sequence is Glycerol-3-phosphate acyltransferase (209 aa).

The next 5 membrane-spanning stretches (helical) occupy residues 13–33 (ALIA…GLLL), 63–83 (LAAA…LIAQ), 94–114 (PGLL…WLGF), 127–147 (LLGI…SIAF), and 151–171 (YSSL…WILG).

The protein belongs to the PlsY family. As to quaternary structure, probably interacts with PlsX.

The protein resides in the cell inner membrane. It catalyses the reaction an acyl phosphate + sn-glycerol 3-phosphate = a 1-acyl-sn-glycero-3-phosphate + phosphate. The protein operates within lipid metabolism; phospholipid metabolism. Its function is as follows. Catalyzes the transfer of an acyl group from acyl-phosphate (acyl-PO(4)) to glycerol-3-phosphate (G3P) to form lysophosphatidic acid (LPA). This enzyme utilizes acyl-phosphate as fatty acyl donor, but not acyl-CoA or acyl-ACP. This Allorhizobium ampelinum (strain ATCC BAA-846 / DSM 112012 / S4) (Agrobacterium vitis (strain S4)) protein is Glycerol-3-phosphate acyltransferase.